We begin with the raw amino-acid sequence, 126 residues long: Histone H2B 1.2 (126 aa).

The span at 1-12 (MPEPAKSAPAPK) shows a compositional bias: low complexity. Positions 1–35 (MPEPAKSAPAPKKGSKKAVTKTPKKDGKKRRKSRK) are disordered. An N6-acetyllysine mark is found at Lys6 and Lys13. Ser15 carries the phosphoserine modification. N6-acetyllysine occurs at positions 16 and 21. Ser113 carries O-linked (GlcNAc) serine glycosylation. A Glycyl lysine isopeptide (Lys-Gly) (interchain with G-Cter in ubiquitin) cross-link involves residue Lys121.

Belongs to the histone H2B family. In terms of assembly, the nucleosome is a histone octamer containing two molecules each of H2A, H2B, H3 and H4 assembled in one H3-H4 heterotetramer and two H2A-H2B heterodimers. The octamer wraps approximately 147 bp of DNA. Post-translationally, monoubiquitination of Lys-121 by BRE1 gives a specific tag for epigenetic transcriptional activation and is also prerequisite for histone H3 'Lys-4' and 'Lys-79' methylation. Phosphorylated on Ser-15 during developmentally programmed apoptosis; which may facilitate apoptotic chromatin condensation. In terms of processing, glcNAcylation at Ser-113 promotes monoubiquitination of Lys-121. It fluctuates in response to extracellular glucose, and associates with transcribed genes.

Its subcellular location is the nucleus. The protein resides in the chromosome. Core component of nucleosome. Nucleosomes wrap and compact DNA into chromatin, limiting DNA accessibility to the cellular machineries which require DNA as a template. Histones thereby play a central role in transcription regulation, DNA repair, DNA replication and chromosomal stability. DNA accessibility is regulated via a complex set of post-translational modifications of histones, also called histone code, and nucleosome remodeling. This Xenopus laevis (African clawed frog) protein is Histone H2B 1.2.